Here is a 94-residue protein sequence, read N- to C-terminus: Pyrimidine/purine nucleoside phosphorylase 2 (94 aa).

The protein belongs to the nucleoside phosphorylase PpnP family.

The catalysed reaction is a purine D-ribonucleoside + phosphate = a purine nucleobase + alpha-D-ribose 1-phosphate. It carries out the reaction adenosine + phosphate = alpha-D-ribose 1-phosphate + adenine. The enzyme catalyses cytidine + phosphate = cytosine + alpha-D-ribose 1-phosphate. It catalyses the reaction guanosine + phosphate = alpha-D-ribose 1-phosphate + guanine. The catalysed reaction is inosine + phosphate = alpha-D-ribose 1-phosphate + hypoxanthine. It carries out the reaction thymidine + phosphate = 2-deoxy-alpha-D-ribose 1-phosphate + thymine. The enzyme catalyses uridine + phosphate = alpha-D-ribose 1-phosphate + uracil. It catalyses the reaction xanthosine + phosphate = alpha-D-ribose 1-phosphate + xanthine. In terms of biological role, catalyzes the phosphorolysis of diverse nucleosides, yielding D-ribose 1-phosphate and the respective free bases. Can use uridine, adenosine, guanosine, cytidine, thymidine, inosine and xanthosine as substrates. Also catalyzes the reverse reactions. The sequence is that of Pyrimidine/purine nucleoside phosphorylase 2 from Psychrobacter arcticus (strain DSM 17307 / VKM B-2377 / 273-4).